The primary structure comprises 201 residues: 3-isopropylmalate dehydratase small subunit (201 aa).

This sequence belongs to the LeuD family. LeuD type 1 subfamily. Heterodimer of LeuC and LeuD.

The catalysed reaction is (2R,3S)-3-isopropylmalate = (2S)-2-isopropylmalate. It functions in the pathway amino-acid biosynthesis; L-leucine biosynthesis; L-leucine from 3-methyl-2-oxobutanoate: step 2/4. Catalyzes the isomerization between 2-isopropylmalate and 3-isopropylmalate, via the formation of 2-isopropylmaleate. The protein is 3-isopropylmalate dehydratase small subunit of Shewanella baltica (strain OS155 / ATCC BAA-1091).